The chain runs to 189 residues: Resolvase (189 aa).

One can recognise a Resolvase/invertase-type recombinase catalytic domain in the interval M1 to G139. S9 acts as the O-(5'-phospho-DNA)-serine intermediate in catalysis. A disordered region spans residues E130–K151. Positions I165–K184 form a DNA-binding region, H-T-H motif.

It belongs to the site-specific recombinase resolvase family.

In terms of biological role, a likely role for the res protein would be to stabilize pCP13 by reducing the number of plasmid multimers resulting from homologous recombination. This Clostridium perfringens (strain 13 / Type A) protein is Resolvase (res).